The chain runs to 435 residues: Transcription factor tau 55 kDa subunit (435 aa).

A disordered region spans residues 362–417 (GLLSPTEENETTNAGQSKGSSTANDPNIQIQEEDVGLPDSTNTSRDHTGDKEEVQS). Phosphoserine is present on Ser-365. Polar residues predominate over residues 372–391 (TTNAGQSKGSSTANDPNIQI). Basic and acidic residues predominate over residues 405-417 (SRDHTGDKEEVQS).

Component of the TFIIIC complex composed of TFC1, TFC3, TFC4, TFC6, TFC7 and TFC8. The subunits are organized in two globular domains, tauA and tauB, connected by a proteolysis-sensitive and flexible linker.

The protein resides in the nucleus. TFIIIC mediates tRNA and 5S RNA gene activation by binding to intragenic promoter elements. Upstream of the transcription start site, TFIIIC assembles the initiation complex TFIIIB-TFIIIC-tDNA, which is sufficient for RNA polymerase III recruitment and function. Part of the tauA domain of TFIIIC that binds boxA DNA promoter sites of tRNA and similar genes. The polypeptide is Transcription factor tau 55 kDa subunit (TFC7) (Saccharomyces cerevisiae (strain ATCC 204508 / S288c) (Baker's yeast)).